A 367-amino-acid chain; its full sequence is Glutamate 5-kinase (367 aa).

Residue lysine 10 coordinates ATP. Residues serine 50, aspartate 137, and asparagine 149 each coordinate substrate. Residues 169–170 and 211–217 contribute to the ATP site; these read TD and TGGMGTK. Residues 275 to 353 form the PUA domain; the sequence is AGEITVDAGA…QQIDAILGYE (79 aa).

It belongs to the glutamate 5-kinase family.

The protein resides in the cytoplasm. It carries out the reaction L-glutamate + ATP = L-glutamyl 5-phosphate + ADP. It participates in amino-acid biosynthesis; L-proline biosynthesis; L-glutamate 5-semialdehyde from L-glutamate: step 1/2. Functionally, catalyzes the transfer of a phosphate group to glutamate to form L-glutamate 5-phosphate. In Klebsiella pneumoniae subsp. pneumoniae (strain ATCC 700721 / MGH 78578), this protein is Glutamate 5-kinase.